The chain runs to 513 residues: Protein indeterminate-domain 11 (513 aa).

Residues 1-84 are disordered; it reads MMNKDMLLHQ…QPGNPDPESE (84 aa). The span at 10–45 shows a compositional bias: polar residues; that stretch reads QHQQPQQDENMSNLTSASGDQASVSSGNITEASGSN. Positions 51–60 are enriched in low complexity; sequence QQQQEQQQQQ. Ser89 is subject to Phosphoserine. C2H2-type zinc fingers lie at residues 99–121 and 141–171; these read FVCE…RRGH and YVCP…CRKH. Residues 163 to 170 carry the Nuclear localization signal motif; the sequence is IKKHFCRK. A C2H2-type 2; degenerate zinc finger spans residues 176–199; the sequence is WKCDKCSKKYAVQSDCKAHSKTCG. Residues Cys178, Cys181, His194, Cys198, Cys205, Cys207, His220, and Cys224 each contribute to the Zn(2+) site. The CCHC-type 2; atypical zinc finger occupies 203–226; sequence YRCDCGTLFSRRDSFITHRAFCEA. Positions 213-225 are SHR-binding; the sequence is RRDSFITHRAFCE. Disordered stretches follow at residues 255–280 and 334–358; these read ASHP…SHNH and PQPH…SLFS. A compositionally biased stretch (low complexity) spans 264–280; it reads TQPTINVSSSSSSSHNH.

The protein localises to the nucleus. Its function is as follows. Probable transcription factor. This chain is Protein indeterminate-domain 11, found in Arabidopsis thaliana (Mouse-ear cress).